The sequence spans 406 residues: Tryptophan synthase beta chain (406 aa).

At lysine 99 the chain carries N6-(pyridoxal phosphate)lysine.

Belongs to the TrpB family. In terms of assembly, tetramer of two alpha and two beta chains. The cofactor is pyridoxal 5'-phosphate.

The enzyme catalyses (1S,2R)-1-C-(indol-3-yl)glycerol 3-phosphate + L-serine = D-glyceraldehyde 3-phosphate + L-tryptophan + H2O. It functions in the pathway amino-acid biosynthesis; L-tryptophan biosynthesis; L-tryptophan from chorismate: step 5/5. Functionally, the beta subunit is responsible for the synthesis of L-tryptophan from indole and L-serine. The protein is Tryptophan synthase beta chain of Brucella abortus (strain 2308).